The chain runs to 159 residues: Cytochrome c-type biogenesis protein CcmE (159 aa).

Residues 1–7 (MTPRQRR) lie on the Cytoplasmic side of the membrane. Residues 8–28 (LGMLLAALACAGIALALVLNA) traverse the membrane as a helical; Signal-anchor for type II membrane protein segment. Over 29-159 (FRSNLVFFFS…LAEGERETQR (131 aa)) the chain is Periplasmic. Positions 123 and 127 each coordinate heme.

Belongs to the CcmE/CycJ family.

The protein localises to the cell inner membrane. Its function is as follows. Heme chaperone required for the biogenesis of c-type cytochromes. Transiently binds heme delivered by CcmC and transfers the heme to apo-cytochromes in a process facilitated by CcmF and CcmH. The polypeptide is Cytochrome c-type biogenesis protein CcmE (Cupriavidus pinatubonensis (strain JMP 134 / LMG 1197) (Cupriavidus necator (strain JMP 134))).